A 374-amino-acid polypeptide reads, in one-letter code: Serine/threonine-protein kinase-transforming protein mos (374 aa).

A Protein kinase domain is found at 94–370; that stretch reads VCLMHRLGSG…LLQRDLKAFR (277 aa). ATP contacts are provided by residues 100–108 and lysine 121; that span reads LGSGGFGSV. Catalysis depends on aspartate 229, which acts as the Proton acceptor.

The protein belongs to the protein kinase superfamily. Ser/Thr protein kinase family.

It carries out the reaction L-seryl-[protein] + ATP = O-phospho-L-seryl-[protein] + ADP + H(+). The catalysed reaction is L-threonyl-[protein] + ATP = O-phospho-L-threonyl-[protein] + ADP + H(+). This Mus musculus (Mouse) protein is Serine/threonine-protein kinase-transforming protein mos (V-MOS).